Here is a 501-residue protein sequence, read N- to C-terminus: Type II methyltransferase M.BsuBI (501 aa).

It belongs to the N(4)/N(6)-methyltransferase family.

It catalyses the reaction a 2'-deoxyadenosine in DNA + S-adenosyl-L-methionine = an N(6)-methyl-2'-deoxyadenosine in DNA + S-adenosyl-L-homocysteine + H(+). Functionally, a beta subtype methylase that recognizes the double-stranded sequence 5'-CTGCAG-3', methylates A-5 on both strands, and protects the DNA from cleavage by the BsuBI endonuclease. This Bacillus subtilis protein is Type II methyltransferase M.BsuBI (hsdBM).